The chain runs to 586 residues: Transcription elongation regulator 1-like protein (586 aa).

The disordered stretch occupies residues 1–30 (MQAGARFQRRRRQLQQQQPRRRQPLLWPMD). Over residues 7 to 23 (FQRRRRQLQQQQPRRRQ) the composition is skewed to basic residues. Residues 148 to 181 (TPIGKSWIDKRIPNCKIFFNNSFALDSTWIHPEE) enclose the WW 1 domain. Disordered regions lie at residues 281-344 (TSPV…PGSP) and 378-448 (DLNR…QILL). Over residues 306–317 (KSRDGDKEDKEP) the composition is skewed to basic and acidic residues. One can recognise a WW 2 domain in the interval 339–372 (PVPGSPWCVVWTGDDRVFFFNPTMHLSVWEKPMD). 3 stretches are compositionally biased toward basic and acidic residues: residues 378–387 (DLNRIIEDPP), 411–421 (DQDVKTKRNRT), and 428–439 (KPEEAKREDKGT). 2 FF domains span residues 450 to 503 (LEER…FVKT) and 515 to 570 (KLLL…FILI).

This Homo sapiens (Human) protein is Transcription elongation regulator 1-like protein (TCERG1L).